A 208-amino-acid chain; its full sequence is Small ribosomal subunit protein uS4 (208 aa).

One can recognise an S4 RNA-binding domain in the interval T97–L160.

Belongs to the universal ribosomal protein uS4 family. As to quaternary structure, part of the 30S ribosomal subunit. Contacts protein S5. The interaction surface between S4 and S5 is involved in control of translational fidelity.

Its function is as follows. One of the primary rRNA binding proteins, it binds directly to 16S rRNA where it nucleates assembly of the body of the 30S subunit. In terms of biological role, with S5 and S12 plays an important role in translational accuracy. This chain is Small ribosomal subunit protein uS4, found in Xanthomonas axonopodis pv. citri (strain 306).